The chain runs to 97 residues: Small ribosomal subunit protein bS6 (97 aa).

Belongs to the bacterial ribosomal protein bS6 family.

Its function is as follows. Binds together with bS18 to 16S ribosomal RNA. The sequence is that of Small ribosomal subunit protein bS6 from Lactococcus lactis subsp. cremoris (strain MG1363).